The following is a 599-amino-acid chain: Dual specificity tyrosine-phosphorylation-regulated kinase 2 (599 aa).

Positions 1-55 (MLTRKPSAAAPAAYPTGRGGDTAVRQLQASPGIGAGAPRSGVGTGPPSPIALPPL) are disordered. The residue at position 30 (S30) is a Phosphoserine. Position 104 is a phosphothreonine; by ATM (T104). The Nuclear localization signal motif lies at 187–189 (KKR). One can recognise a Protein kinase domain in the interval 220–533 (YEVLKVIGKG…PGQALRHPWL (314 aa)). ATP is bound by residues 226-234 (IGKGSFGQV), K249, and 299-302 (FELL). D346 functions as the Proton acceptor in the catalytic mechanism. T379 is subject to Phosphothreonine; by MAP3K10. A Phosphotyrosine; by autocatalysis modification is found at Y380. Position 440 is a phosphoserine; by ATM (S440). S447 bears the Phosphoserine; by MAP3K10 mark.

The protein belongs to the protein kinase superfamily. CMGC Ser/Thr protein kinase family. MNB/DYRK subfamily. Component of an E3 ligase complex containing DYRK2, EDD/UBR5, DDB1 and DCAF1 (EDVP complex). Interacts directly with EDD/UBR5, DDB1 and DCAF1. Interacts with SIAH2 and MDM2. Interacts with MAP3K10 and NFATC1. May also interact with CCNL2. Requires Mg(2+) as cofactor. Mn(2+) is required as a cofactor. Post-translationally, autophosphorylates cotranslationally on the second tyrosine residue in the Tyr-X-Tyr motif in the activation loop, but once mature, does not have any protein tyrosine kinase activity. Phosphorylated at Thr-104 and Ser-440 by ATM in response to genotoxic stress. Under normal conditions, polyubiquitinated in the nucleus by MDM2, leading to its proteasomal degradation. Phosphorylation on Thr-104 and Ser-440 by ATM in response to genotoxic stress disrupts MDM2 binding and prevents MDM2-mediated ubiquitination and subsequent proteasomal degradation. Polyubiquitinated by SIAH2, leading to its proteasomal degradation. Polyubiquitinated by SIAH2 occurs under normal conditions, and is enhanced in response to hypoxia.

It is found in the cytoplasm. The protein resides in the nucleus. The catalysed reaction is L-seryl-[protein] + ATP = O-phospho-L-seryl-[protein] + ADP + H(+). The enzyme catalyses L-threonyl-[protein] + ATP = O-phospho-L-threonyl-[protein] + ADP + H(+). It carries out the reaction L-tyrosyl-[protein] + ATP = O-phospho-L-tyrosyl-[protein] + ADP + H(+). Activated by autophosphorylation on the second tyrosine residue in the Tyr-X-Tyr motif in the activation loop. In terms of biological role, serine/threonine-protein kinase involved in the regulation of the mitotic cell cycle, cell proliferation, apoptosis, organization of the cytoskeleton and neurite outgrowth. Functions in part via its role in ubiquitin-dependent proteasomal protein degradation. Functions downstream of ATM and phosphorylates p53/TP53 at 'Ser-46', and thereby contributes to the induction of apoptosis in response to DNA damage. Phosphorylates NFATC1, and thereby inhibits its accumulation in the nucleus and its transcription factor activity. Phosphorylates EIF2B5 at 'Ser-544', enabling its subsequent phosphorylation and inhibition by GSK3B. Likewise, phosphorylation of NFATC1, CRMP2/DPYSL2 and CRMP4/DPYSL3 promotes their subsequent phosphorylation by GSK3B. May play a general role in the priming of GSK3 substrates. Inactivates GYS1 by phosphorylation at 'Ser-641', and potentially also a second phosphorylation site, thus regulating glycogen synthesis. Mediates EDVP E3 ligase complex formation and is required for the phosphorylation and subsequent degradation of KATNA1. Phosphorylates TERT at 'Ser-457', promoting TERT ubiquitination by the EDVP complex. Phosphorylates SIAH2, and thereby increases its ubiquitin ligase activity. Promotes the proteasomal degradation of MYC and JUN, and thereby regulates progress through the mitotic cell cycle and cell proliferation. Promotes proteasomal degradation of GLI2 and GLI3, and thereby plays a role in smoothened and sonic hedgehog signaling. Phosphorylates CRMP2/DPYSL2, CRMP4/DPYSL3, DCX, EIF2B5, EIF4EBP1, GLI2, GLI3, GYS1, JUN, MDM2, MYC, NFATC1, p53/TP53, TAU/MAPT and KATNA1. Can phosphorylate histone H1, histone H3 and histone H2B (in vitro). Can phosphorylate CARHSP1 (in vitro). Plays a role in cytoskeleton organization and neurite outgrowth via its phosphorylation of DCX. The sequence is that of Dual specificity tyrosine-phosphorylation-regulated kinase 2 from Mus musculus (Mouse).